We begin with the raw amino-acid sequence, 553 residues long: Arginine--tRNA ligase (553 aa).

The 'HIGH' region motif lies at 132–140 (PTGDLHIGH).

Belongs to the class-I aminoacyl-tRNA synthetase family. In terms of assembly, monomer.

It is found in the cytoplasm. The catalysed reaction is tRNA(Arg) + L-arginine + ATP = L-arginyl-tRNA(Arg) + AMP + diphosphate. The chain is Arginine--tRNA ligase from Staphylococcus aureus (strain Mu50 / ATCC 700699).